The sequence spans 445 residues: Argininosuccinate synthase (445 aa).

Residues 17-25 and Ala-43 contribute to the ATP site; that span reads AFSGGLDTS. Tyr-99 provides a ligand contact to L-citrulline. The ATP site is built by Gly-129 and Thr-131. L-aspartate is bound by residues Thr-131, Asn-135, and Asp-136. Asn-135 provides a ligand contact to L-citrulline. Asp-136 lines the ATP pocket. Residues Arg-139 and Ser-192 each contribute to the L-citrulline site. Asp-194 contributes to the ATP binding site. Thr-201, Glu-203, and Glu-280 together coordinate L-citrulline.

It belongs to the argininosuccinate synthase family. Type 2 subfamily. As to quaternary structure, homotetramer.

The protein localises to the cytoplasm. It catalyses the reaction L-citrulline + L-aspartate + ATP = 2-(N(omega)-L-arginino)succinate + AMP + diphosphate + H(+). It participates in amino-acid biosynthesis; L-arginine biosynthesis; L-arginine from L-ornithine and carbamoyl phosphate: step 2/3. This Polaromonas naphthalenivorans (strain CJ2) protein is Argininosuccinate synthase.